We begin with the raw amino-acid sequence, 327 residues long: Lipoyl synthase (327 aa).

7 residues coordinate [4Fe-4S] cluster: cysteine 66, cysteine 71, cysteine 77, cysteine 92, cysteine 96, cysteine 99, and serine 306. A Radical SAM core domain is found at 78 to 295 (FSKGTATFMI…EKEAYELGFS (218 aa)).

The protein belongs to the radical SAM superfamily. Lipoyl synthase family. [4Fe-4S] cluster serves as cofactor.

It localises to the cytoplasm. It carries out the reaction [[Fe-S] cluster scaffold protein carrying a second [4Fe-4S](2+) cluster] + N(6)-octanoyl-L-lysyl-[protein] + 2 oxidized [2Fe-2S]-[ferredoxin] + 2 S-adenosyl-L-methionine + 4 H(+) = [[Fe-S] cluster scaffold protein] + N(6)-[(R)-dihydrolipoyl]-L-lysyl-[protein] + 4 Fe(3+) + 2 hydrogen sulfide + 2 5'-deoxyadenosine + 2 L-methionine + 2 reduced [2Fe-2S]-[ferredoxin]. Its pathway is protein modification; protein lipoylation via endogenous pathway; protein N(6)-(lipoyl)lysine from octanoyl-[acyl-carrier-protein]: step 2/2. In terms of biological role, catalyzes the radical-mediated insertion of two sulfur atoms into the C-6 and C-8 positions of the octanoyl moiety bound to the lipoyl domains of lipoate-dependent enzymes, thereby converting the octanoylated domains into lipoylated derivatives. In Neisseria meningitidis serogroup A / serotype 4A (strain DSM 15465 / Z2491), this protein is Lipoyl synthase.